Consider the following 297-residue polypeptide: Homoserine kinase (297 aa).

82-92 is a binding site for ATP; it reads PLTRGLGSSAS.

The protein belongs to the GHMP kinase family. Homoserine kinase subfamily.

The protein localises to the cytoplasm. It catalyses the reaction L-homoserine + ATP = O-phospho-L-homoserine + ADP + H(+). Its pathway is amino-acid biosynthesis; L-threonine biosynthesis; L-threonine from L-aspartate: step 4/5. Catalyzes the ATP-dependent phosphorylation of L-homoserine to L-homoserine phosphate. This Bacillus cereus (strain G9842) protein is Homoserine kinase.